A 399-amino-acid polypeptide reads, in one-letter code: Lipoyl synthase, mitochondrial (399 aa).

A mitochondrion-targeting transit peptide spans Met1 to Ala30. Over residues Ala31–Lys41 the composition is skewed to basic and acidic residues. The segment at Ala31–Glu58 is disordered. [4Fe-4S] cluster contacts are provided by Cys131, Cys136, Cys142, Cys162, Cys166, Cys169, and Ser375. The region spanning Gly145–Leu364 is the Radical SAM core domain.

Belongs to the radical SAM superfamily. Lipoyl synthase family. [4Fe-4S] cluster is required as a cofactor.

Its subcellular location is the mitochondrion. It catalyses the reaction [[Fe-S] cluster scaffold protein carrying a second [4Fe-4S](2+) cluster] + N(6)-octanoyl-L-lysyl-[protein] + 2 oxidized [2Fe-2S]-[ferredoxin] + 2 S-adenosyl-L-methionine + 4 H(+) = [[Fe-S] cluster scaffold protein] + N(6)-[(R)-dihydrolipoyl]-L-lysyl-[protein] + 4 Fe(3+) + 2 hydrogen sulfide + 2 5'-deoxyadenosine + 2 L-methionine + 2 reduced [2Fe-2S]-[ferredoxin]. It participates in protein modification; protein lipoylation via endogenous pathway; protein N(6)-(lipoyl)lysine from octanoyl-[acyl-carrier-protein]: step 2/2. Functionally, catalyzes the radical-mediated insertion of two sulfur atoms into the C-6 and C-8 positions of the octanoyl moiety bound to the lipoyl domains of lipoate-dependent enzymes, thereby converting the octanoylated domains into lipoylated derivatives. The polypeptide is Lipoyl synthase, mitochondrial (Ostreococcus lucimarinus (strain CCE9901)).